Consider the following 95-residue polypeptide: Aspartyl/glutamyl-tRNA(Asn/Gln) amidotransferase subunit C (95 aa).

It belongs to the GatC family. In terms of assembly, heterotrimer of A, B and C subunits.

The catalysed reaction is L-glutamyl-tRNA(Gln) + L-glutamine + ATP + H2O = L-glutaminyl-tRNA(Gln) + L-glutamate + ADP + phosphate + H(+). It carries out the reaction L-aspartyl-tRNA(Asn) + L-glutamine + ATP + H2O = L-asparaginyl-tRNA(Asn) + L-glutamate + ADP + phosphate + 2 H(+). In terms of biological role, allows the formation of correctly charged Asn-tRNA(Asn) or Gln-tRNA(Gln) through the transamidation of misacylated Asp-tRNA(Asn) or Glu-tRNA(Gln) in organisms which lack either or both of asparaginyl-tRNA or glutaminyl-tRNA synthetases. The reaction takes place in the presence of glutamine and ATP through an activated phospho-Asp-tRNA(Asn) or phospho-Glu-tRNA(Gln). The sequence is that of Aspartyl/glutamyl-tRNA(Asn/Gln) amidotransferase subunit C from Prosthecochloris aestuarii (strain DSM 271 / SK 413).